The primary structure comprises 37 residues: Cytochrome b6-f complex subunit 5 (37 aa).

Residues 5-25 (LLSGIVLGLIPITLLGLFVTA) traverse the membrane as a helical segment.

Belongs to the PetG family. In terms of assembly, the 4 large subunits of the cytochrome b6-f complex are cytochrome b6, subunit IV (17 kDa polypeptide, PetD), cytochrome f and the Rieske protein, while the 4 small subunits are PetG, PetL, PetM and PetN. The complex functions as a dimer.

The protein resides in the plastid. Its subcellular location is the chloroplast thylakoid membrane. Component of the cytochrome b6-f complex, which mediates electron transfer between photosystem II (PSII) and photosystem I (PSI), cyclic electron flow around PSI, and state transitions. PetG is required for either the stability or assembly of the cytochrome b6-f complex. This is Cytochrome b6-f complex subunit 5 from Marchantia polymorpha (Common liverwort).